The following is a 264-amino-acid chain: Undecaprenyl-diphosphatase (264 aa).

7 helical membrane passes run 38 to 58, 75 to 95, 106 to 126, 136 to 156, 181 to 201, 217 to 237, and 242 to 262; these read RSDF…VLVF, REYV…GLVV, VSPV…VEAY, VTWT…VFPG, FVFL…FLEM, VAFL…MGYI, and FTAF…WLPS.

This sequence belongs to the UppP family.

The protein resides in the cell inner membrane. It carries out the reaction di-trans,octa-cis-undecaprenyl diphosphate + H2O = di-trans,octa-cis-undecaprenyl phosphate + phosphate + H(+). Catalyzes the dephosphorylation of undecaprenyl diphosphate (UPP). Confers resistance to bacitracin. The protein is Undecaprenyl-diphosphatase of Stenotrophomonas maltophilia (strain R551-3).